A 201-amino-acid polypeptide reads, in one-letter code: Recombination protein RecR (201 aa).

The segment at 57–74 adopts a C4-type zinc-finger fold; it reads CRICGNITENSVNPCAIC. The region spanning 82 to 178 is the Toprim domain; that stretch reads STVFVVENSR…KVTRLAHGLA (97 aa).

It belongs to the RecR family.

May play a role in DNA repair. It seems to be involved in an RecBC-independent recombinational process of DNA repair. It may act with RecF and RecO. The sequence is that of Recombination protein RecR from Leuconostoc citreum (strain KM20).